Consider the following 699-residue polypeptide: 1,4-alpha-glucan-branching enzyme (699 aa).

Substrate-binding positions include asparagine 59–glutamate 60 and tryptophan 88–proline 90. Position 104 (tryptophan 104) interacts with (1,4-alpha-D-glucosyl)n. Aspartate 115 to lysine 118 lines the substrate pocket. Lysine 140 lines the (1,4-alpha-D-glucosyl)n pocket. Tyrosine 170 carries the phosphotyrosine modification. Glutamate 330–arginine 333 is a substrate binding site. Residue aspartate 354 is the Nucleophile of the active site. Glutamate 409 functions as the Proton donor in the catalytic mechanism.

Belongs to the glycosyl hydrolase 13 family. GlgB subfamily. Monomer.

It carries out the reaction Transfers a segment of a (1-&gt;4)-alpha-D-glucan chain to a primary hydroxy group in a similar glucan chain.. The protein operates within glycan biosynthesis; glycogen biosynthesis. Its function is as follows. Glycogen-branching enzyme participates in the glycogen biosynthetic process along with glycogenin and glycogen synthase. Generates alpha-1,6-glucosidic branches from alpha-1,4-linked glucose chains, to increase solubility of the glycogen polymer. This Equus caballus (Horse) protein is 1,4-alpha-glucan-branching enzyme (GBE1).